The sequence spans 474 residues: Type I restriction enzyme EcoBI specificity subunit (474 aa).

This sequence belongs to the type-I restriction system S methylase family. The type I restriction/modification system is composed of three polypeptides R, M and S. The restriction enzyme has stoichiometry R(2)M(2)S(1) while the methyltransferase is M(2)S(1).

Its function is as follows. The specificity (S) subunit of a type I restriction enzyme; this subunit dictates DNA sequence specificity. The M and S subunits together form a methyltransferase (MTase) that methylates A-3 on the top strand and A-4 on the bottom strand of the sequence 5'-TGAN(8)TGCT-3'. In the presence of the R subunit the complex can also act as an endonuclease, binding to the same target sequence but cutting the DNA some distance from this site. Whether the DNA is cut or modified depends on the methylation state of the target sequence. When the target site is unmodified, the DNA is cut. When the target site is hemimethylated, the complex acts as a maintenance MTase modifying the DNA so that both strands become methylated. After locating a non-methylated recognition site, the enzyme complex serves as a molecular motor that translocates DNA in an ATP-dependent manner until a collision occurs that triggers cleavage. The protein is Type I restriction enzyme EcoBI specificity subunit of Escherichia coli.